A 189-amino-acid chain; its full sequence is GMP synthase [glutamine-hydrolyzing] subunit A (189 aa).

One can recognise a Glutamine amidotransferase type-1 domain in the interval 5 to 189 (KILVVNNYGQ…TNFLEICEKY (185 aa)). The active-site Nucleophile is the Cys79. Active-site residues include His166 and Glu168.

In terms of assembly, heterodimer composed of a glutamine amidotransferase subunit (A) and a GMP-binding subunit (B).

It carries out the reaction XMP + L-glutamine + ATP + H2O = GMP + L-glutamate + AMP + diphosphate + 2 H(+). Its pathway is purine metabolism; GMP biosynthesis; GMP from XMP (L-Gln route): step 1/1. Its function is as follows. Catalyzes the synthesis of GMP from XMP. In Methanosarcina barkeri (strain Fusaro / DSM 804), this protein is GMP synthase [glutamine-hydrolyzing] subunit A.